Consider the following 66-residue polypeptide: Large ribosomal subunit protein bL33c (66 aa).

Belongs to the bacterial ribosomal protein bL33 family.

The protein localises to the plastid. Its subcellular location is the chloroplast. This chain is Large ribosomal subunit protein bL33c, found in Welwitschia mirabilis (Tree tumbo).